Consider the following 152-residue polypeptide: Protein-export protein SecB (152 aa).

The protein belongs to the SecB family. Homotetramer, a dimer of dimers. One homotetramer interacts with 1 SecA dimer.

The protein localises to the cytoplasm. In terms of biological role, one of the proteins required for the normal export of preproteins out of the cell cytoplasm. It is a molecular chaperone that binds to a subset of precursor proteins, maintaining them in a translocation-competent state. It also specifically binds to its receptor SecA. The sequence is that of Protein-export protein SecB from Dechloromonas aromatica (strain RCB).